The following is a 327-amino-acid chain: Diacylglycerol acyltransferase/mycolyltransferase Ag85B (327 aa).

The N-terminal stretch at 1–38 (MIDVSGKIRAWGRWLLVGAAATLPSLISLAGGAATASA) is a signal peptide. 80–81 (LR) lines the substrate pocket. Residues 96–106 (FEWYYQSGLSV) form a fibronectin-binding region. Cysteines 125 and 130 form a disulfide. Residues S164 and D192 each contribute to the substrate site. S164 serves as the catalytic Nucleophile. E268 is a catalytic residue. Residues 270-273 (FVHG), K277, and 300-302 (HSW) contribute to the substrate site. The active site involves H300.

Belongs to the mycobacterial A85 antigen family.

The protein resides in the secreted. The catalysed reaction is 2 alpha,alpha'-trehalose 6-mycolate = alpha,alpha'-trehalose 6,6'-bismycolate + alpha,alpha-trehalose. The enzyme catalyses an acyl-CoA + a 1,2-diacyl-sn-glycerol = a triacyl-sn-glycerol + CoA. In terms of biological role, the antigen 85 proteins (FbpA, FbpB, FbpC) are responsible for the high affinity of mycobacteria for fibronectin, a large adhesive glycoprotein, which facilitates the attachment of M.tuberculosis to murine alveolar macrophages (AMs). They also help to maintain the integrity of the cell wall by catalyzing the transfer of mycolic acids to cell wall arabinogalactan and through the synthesis of alpha,alpha-trehalose dimycolate (TDM, cord factor). They catalyze the transfer of a mycoloyl residue from one molecule of alpha,alpha-trehalose monomycolate (TMM) to another TMM, leading to the formation of TDM. In Mycobacterium leprae (strain TN), this protein is Diacylglycerol acyltransferase/mycolyltransferase Ag85B (fbpB).